Consider the following 359-residue polypeptide: Dual-specificity RNA methyltransferase RlmN (359 aa).

Catalysis depends on Glu90, which acts as the Proton acceptor. A Radical SAM core domain is found at 109 to 342; that stretch reads HQERYTVCIS…CTIRESKGLD (234 aa). Cys116 and Cys347 are joined by a disulfide. [4Fe-4S] cluster is bound by residues Cys123, Cys127, and Cys130. Residues 173–174, Ser205, 228–230, and Asn304 contribute to the S-adenosyl-L-methionine site; these read GE and SLH. The active-site S-methylcysteine intermediate is Cys347.

The protein belongs to the radical SAM superfamily. RlmN family. It depends on [4Fe-4S] cluster as a cofactor.

It is found in the cytoplasm. The enzyme catalyses adenosine(2503) in 23S rRNA + 2 reduced [2Fe-2S]-[ferredoxin] + 2 S-adenosyl-L-methionine = 2-methyladenosine(2503) in 23S rRNA + 5'-deoxyadenosine + L-methionine + 2 oxidized [2Fe-2S]-[ferredoxin] + S-adenosyl-L-homocysteine. It catalyses the reaction adenosine(37) in tRNA + 2 reduced [2Fe-2S]-[ferredoxin] + 2 S-adenosyl-L-methionine = 2-methyladenosine(37) in tRNA + 5'-deoxyadenosine + L-methionine + 2 oxidized [2Fe-2S]-[ferredoxin] + S-adenosyl-L-homocysteine. In terms of biological role, specifically methylates position 2 of adenine 2503 in 23S rRNA and position 2 of adenine 37 in tRNAs. m2A2503 modification seems to play a crucial role in the proofreading step occurring at the peptidyl transferase center and thus would serve to optimize ribosomal fidelity. The polypeptide is Dual-specificity RNA methyltransferase RlmN (Sulfurovum sp. (strain NBC37-1)).